A 589-amino-acid chain; its full sequence is Phenylalanine--tRNA ligase beta subunit (589 aa).

The 78-residue stretch at 302–379 (LPYRKEMVRA…IAYGYNNIQM (78 aa)) folds into the B5 domain. 4 residues coordinate Mg(2+): Asp357, Asp363, Glu366, and Asp367.

This sequence belongs to the phenylalanyl-tRNA synthetase beta subunit family. Type 2 subfamily. As to quaternary structure, heterotetramer; dimer of two heterodimers formed by FARSA and FARSB. Requires Mg(2+) as cofactor.

The protein resides in the cytoplasm. The enzyme catalyses tRNA(Phe) + L-phenylalanine + ATP = L-phenylalanyl-tRNA(Phe) + AMP + diphosphate + H(+). This Mus musculus (Mouse) protein is Phenylalanine--tRNA ligase beta subunit (Farsb).